Consider the following 438-residue polypeptide: Battenin (438 aa).

The interval 1–27 (MGSSAGSWRRLEDSEREETDSEPQAPR) is disordered. Topologically, residues 1–37 (MGSSAGSWRRLEDSEREETDSEPQAPRLDSRSVLWKN) are cytoplasmic. Position 14 is a phosphoserine (S14). The helical transmembrane segment at 38-58 (AVGFWILGLCNNFSYVVMLSA) threads the bilayer. The Lumenal portion of the chain corresponds to 59-127 (AHDILKQEQA…GLHLLPYSPR (69 aa)). The disordered stretch occupies residues 67–87 (QASGNQSHVEPGPTPTPHNSS). N-linked (GlcNAc...) asparagine glycosylation is found at N71 and N85. A helical transmembrane segment spans residues 128 to 148 (VLVSGVCSAGSFVLVAFSQSV). Topologically, residues 149–151 (GLS) are cytoplasmic. The helical transmembrane segment at 152 to 172 (LCGVVLASISSGLGEVTFLSL) threads the bilayer. The Lumenal segment spans residues 173–182 (TAFYPSAVIS). The chain crosses the membrane as a helical span at residues 183–203 (WWSSGTGGAGLLGSLSYLGLT). Topologically, residues 204–277 (QAGLSPQHTL…DLSLQERWTV (74 aa)) are cytoplasmic. The interval 239–261 (PGGENEAETAARQPLIGTETPES) is disordered. Positions 242–244 (ENE) match the Lysosomal targeting motif motif. Residues 253-254 (LI) carry the Lysosomal targeting motif. Required for AP1G1, AP2A2 and AP3D1 interaction motif. A helical membrane pass occupies residues 278 to 298 (FKGLLWYIIPLVLVYFAEYFI). At 299 to 346 (NQGLFELLFFRNTSLSHAQQYRWYQMLYQAGVFASRSSLQCCRIRFTW) the chain is on the lumenal side. A glycan (N-linked (GlcNAc...) asparagine) is linked at N310. The chain crosses the membrane as a helical span at residues 347 to 367 (VLALLQCLNLALLLADVCLNF). Residues 368–438 (LPSIYLIFII…PLHDFLCHLP (71 aa)) are Cytoplasmic-facing. The Lysosomal targeting motif motif lies at 409–419 (MEAACISDTLG). C435 carries the cysteine methyl ester modification. A lipid anchor (S-farnesyl cysteine) is attached at C435. A propeptide spans 436–438 (HLP) (removed in mature form).

Belongs to the battenin family. Homooligomer. Interacts with DCTN1, KIF3A, RAB7A and RILP. Interacts with CLN5. Interacts with KCNIP3. Post-translationally, highly glycosylated. In terms of processing, farnesylation is important for trafficking to lysosomes. As to expression, expressed throughout the brain, such as, in the cerebral cortex, hippocampus, cerebellum and several different cerebral nuclei (at protein level). In the cerebral cortex, expressed in all cortical layers. In the hippocampus, expressed in the granule cells in the dentate gyrus and the pyramidal cells of the hippocampus proper. In the cerebellum expressed in the granular and molecular layers, and in the Purkinje cell layer.

Its subcellular location is the lysosome membrane. It is found in the late endosome. It localises to the lysosome. The protein resides in the membrane raft. The protein localises to the golgi apparatus. Its subcellular location is the trans-Golgi network. It is found in the synapse. It localises to the synaptosome. The protein resides in the early endosome membrane. The protein localises to the late endosome membrane. Its subcellular location is the cytoplasmic vesicle. It is found in the autophagosome. In terms of biological role, mediates microtubule-dependent, anterograde transport connecting the Golgi network, endosomes, autophagosomes, lysosomes and plasma membrane, and participates in several cellular processes such as regulation of lysosomal pH, lysosome protein degradation, receptor-mediated endocytosis, autophagy, transport of proteins and lipids from the TGN, apoptosis and synaptic transmission. Facilitates the proteins transport from trans-Golgi network (TGN)-to other membrane compartments such as transport of microdomain-associated proteins to the plasma membrane, IGF2R transport to the lysosome where it regulates the CTSD release leading to regulation of CTSD maturation and thereby APP intracellular processing. Moreover regulates CTSD activity in response to osmotic stress. Also binds galactosylceramide and transports it from the trans Golgi to the rafts, which may have immediate and downstream effects on cell survival by modulating ceramide synthesis. At the plasma membrane, regulates actin-dependent events including filopodia formation, cell migration, and pinocytosis through ARF1-CDC42 pathway and also the cytoskeleton organization through interaction with MYH10 and fodrin leading to the regulation of the plasma membrane association of Na+, K+ ATPase complex. Regulates synaptic transmission in the amygdala, hippocampus, and cerebellum through regulation of synaptic vesicles density and their proximity to active zones leading to modulation of short-term plasticity and age-dependent anxious behavior, learning and memory. Regulates autophagic vacuoles (AVs) maturation by modulating the trafficking between endocytic and autophagolysosomal/lysosomal compartments, which involves vesicle fusion leading to regulation of degradation process. Also participates in cellular homeostasis of compounds such as, water, ions, amino acids, proteins and lipids in several tissue namely in brain and kidney through regulation of their transport and synthesis. The sequence is that of Battenin from Mus musculus (Mouse).